The sequence spans 301 residues: Probable DNA-directed RNA polymerase III subunit rpc6 (301 aa).

This sequence belongs to the eukaryotic RPC34/RPC39 RNA polymerase subunit family. As to quaternary structure, component of the RNA polymerase III (Pol III) complex consisting of 17 subunits. Interacts with TFIIB.

It localises to the nucleus. Its function is as follows. DNA-dependent RNA polymerase catalyzes the transcription of DNA into RNA using the four ribonucleoside triphosphates as substrates. Specific peripheric component of RNA polymerase III which synthesizes small RNAs, such as 5S rRNA and tRNAs. This is Probable DNA-directed RNA polymerase III subunit rpc6 (rpc6) from Schizosaccharomyces pombe (strain 972 / ATCC 24843) (Fission yeast).